The primary structure comprises 93 residues: Molybdopterin synthase sulfur carrier subunit (93 aa).

Gly-93 carries the post-translational modification 1-thioglycine; alternate. At Gly-93 the chain carries Glycyl adenylate; alternate.

This sequence belongs to the MoaD family. MOCS2A subfamily. As to quaternary structure, heterotetramer; composed of 2 small (MOCS2A) and 2 large (MOCS2B) subunits. In terms of processing, C-terminal thiocarboxylation occurs in 2 steps, it is first acyl-adenylated (-COAMP) via the hesA/moeB/thiF part of UBA4, then thiocarboxylated (-COSH) via the rhodanese domain of UBA4.

Its subcellular location is the cytoplasm. It participates in cofactor biosynthesis; molybdopterin biosynthesis. In terms of biological role, acts as a sulfur carrier required for molybdopterin biosynthesis. Component of the molybdopterin synthase complex that catalyzes the conversion of precursor Z into molybdopterin by mediating the incorporation of 2 sulfur atoms into precursor Z to generate a dithiolene group. In the complex, serves as sulfur donor by being thiocarboxylated (-COSH) at its C-terminus by UBA4. After interaction with MOCS2B, the sulfur is then transferred to precursor Z to form molybdopterin. The sequence is that of Molybdopterin synthase sulfur carrier subunit from Mycosarcoma maydis (Corn smut fungus).